We begin with the raw amino-acid sequence, 310 residues long: tRNA uridine(34) hydroxylase (310 aa).

The region spanning 123–217 (ADPDVVVIDV…YLEKVPEDES (95 aa)) is the Rhodanese domain. C177 functions as the Cysteine persulfide intermediate in the catalytic mechanism.

Belongs to the TrhO family.

It carries out the reaction uridine(34) in tRNA + AH2 + O2 = 5-hydroxyuridine(34) in tRNA + A + H2O. Functionally, catalyzes oxygen-dependent 5-hydroxyuridine (ho5U) modification at position 34 in tRNAs. This is tRNA uridine(34) hydroxylase from Acaryochloris marina (strain MBIC 11017).